The following is a 245-amino-acid chain: Orotidine 5'-phosphate decarboxylase (245 aa).

Substrate contacts are provided by residues Asp-22, Lys-44, 71-80, Thr-131, Arg-192, Gln-201, Gly-221, and Arg-222; that span reads DLKFHDIPNT. Residue Lys-73 is the Proton donor of the active site.

Belongs to the OMP decarboxylase family. Type 1 subfamily. Homodimer.

The catalysed reaction is orotidine 5'-phosphate + H(+) = UMP + CO2. It participates in pyrimidine metabolism; UMP biosynthesis via de novo pathway; UMP from orotate: step 2/2. Catalyzes the decarboxylation of orotidine 5'-monophosphate (OMP) to uridine 5'-monophosphate (UMP). The sequence is that of Orotidine 5'-phosphate decarboxylase from Salmonella newport (strain SL254).